Here is a 354-residue protein sequence, read N- to C-terminus: Thymidylate synthase (354 aa).

The tract at residues 1-32 (MPAAGSEPSRPPSPPGVQEQSAEPRPPPPPHG) is disordered. Arg-53 is a dUMP binding site. The residue at position 117 (Ser-117) is a Phosphoserine. 178–179 (RR) is a dUMP binding site. Cys-198 (nucleophile) is an active-site residue. DUMP-binding positions include 218–221 (RSGD), Asn-229, and 259–261 (HIY). Asp-221 is a binding site for (6R)-5,10-methylene-5,6,7,8-tetrahydrofolate. A Glycyl lysine isopeptide (Lys-Gly) (interchain with G-Cter in SUMO2) cross-link involves residue Lys-349. A (6R)-5,10-methylene-5,6,7,8-tetrahydrofolate-binding site is contributed by Ala-353.

It belongs to the thymidylate synthase family. In terms of assembly, homodimer.

It localises to the nucleus. The protein localises to the cytoplasm. It is found in the mitochondrion. The protein resides in the mitochondrion matrix. Its subcellular location is the mitochondrion inner membrane. It catalyses the reaction dUMP + (6R)-5,10-methylene-5,6,7,8-tetrahydrofolate = 7,8-dihydrofolate + dTMP. It functions in the pathway pyrimidine metabolism; dTTP biosynthesis. Catalyzes the reductive methylation of 2'-deoxyuridine 5'-monophosphate (dUMP) to thymidine 5'-monophosphate (dTMP), using the cosubstrate, 5,10- methylenetetrahydrofolate (CH2H4folate) as a 1-carbon donor and reductant and contributes to the de novo mitochondrial thymidylate biosynthesis pathway. This chain is Thymidylate synthase (TYMS), found in Bos taurus (Bovine).